A 22-amino-acid chain; its full sequence is Defensin D1 (22 aa).

This sequence belongs to the DEFL family. Group II subfamily.

In terms of biological role, antimicrobial peptide. Active against Gram-positive and Gram-negative bacterial pathogens. This Spinacia oleracea (Spinach) protein is Defensin D1.